The primary structure comprises 241 residues: Trypsin-1 (241 aa).

Positions 1–13 (MKSLIFVLLLGAV) are cleaved as a signal peptide. Positions 14–19 (FAEEDK) are cleaved as a propeptide — activation peptide. Residues 20 to 239 (IVGGYECTKH…LSGWVRDTMA (220 aa)) enclose the Peptidase S1 domain. 6 disulfide bridges follow: cysteine 26–cysteine 155, cysteine 44–cysteine 60, cysteine 128–cysteine 228, cysteine 135–cysteine 201, cysteine 166–cysteine 180, and cysteine 191–cysteine 215. Catalysis depends on charge relay system residues histidine 59 and aspartate 103. Serine 195 acts as the Charge relay system in catalysis.

It belongs to the peptidase S1 family.

The protein localises to the secreted. The protein resides in the extracellular space. The enzyme catalyses Preferential cleavage: Arg-|-Xaa, Lys-|-Xaa.. The polypeptide is Trypsin-1 (Gadus morhua (Atlantic cod)).